Consider the following 249-residue polypeptide: Isoprenyl transferase 1 (249 aa).

The active site involves aspartate 30. Mg(2+) is bound at residue aspartate 30. Substrate contacts are provided by residues 31–34, tryptophan 35, arginine 43, histidine 47, and 75–77; these read GNGR and STE. Asparagine 78 (proton acceptor) is an active-site residue. Substrate-binding positions include tryptophan 79, arginine 81, arginine 198, and 204–206; that span reads RMS. Mg(2+) is bound at residue glutamate 217.

It belongs to the UPP synthase family. As to quaternary structure, homodimer. Requires Mg(2+) as cofactor.

Functionally, catalyzes the condensation of isopentenyl diphosphate (IPP) with allylic pyrophosphates generating different type of terpenoids. The chain is Isoprenyl transferase 1 from Tropheryma whipplei (strain Twist) (Whipple's bacillus).